A 475-amino-acid polypeptide reads, in one-letter code: Peroxisome proliferator-activated receptor gamma (475 aa).

S82 is subject to Phosphoserine; by MAPK. The segment at residues A106 to F180 is a DNA-binding region (nuclear receptor). NR C4-type zinc fingers lie at residues C109–C129 and C146–C168. The interval H175–M250 is interaction with FAM120B. The region spanning D208–D473 is the NR LBD domain. Residue K222 forms a Glycyl lysine isopeptide (Lys-Gly) (interchain with G-Cter in ubiquitin) linkage. Residues P465–D473 carry the 9aaTAD motif.

Belongs to the nuclear hormone receptor family. NR1 subfamily. Interacts with FOXO1 (acetylated form). Heterodimer with other nuclear receptors, such as RXRA. The heterodimer with the retinoic acid receptor RXRA is called adipocyte-specific transcription factor ARF6. Interacts with NCOA6 coactivator, leading to a strong increase in transcription of target genes. Interacts with coactivator PPARBP, leading to a mild increase in transcription of target genes. Interacts with NOCA7 in a ligand-inducible manner. Interacts with NCOA1 and NCOA2 LXXLL motifs. Interacts with ASXL1, ASXL2, DNTTIP2, FAM120B, MAP2K1/MEK1, NR0B2, PDPK1, PRDM16, PRMT2 and TGFB1I1. Interacts (when activated by agonist) with PPP5C. Interacts with HELZ2 and THRAP3; the interaction stimulates the transcriptional activity of PPARG. Interacts with PER2, the interaction is ligand dependent and blocks PPARG recruitment to target promoters. Interacts with NOCT. Interacts with ACTN4. Interacts (when in the liganded conformation) with GPS2. Interacts with CRY1 and CRY2 in a ligand-dependent manner. In the absence of hormonal ligand, interacts with TACC1. In macrophages, interacts with PAQR3 and STUB1; the interactions promote PPARG poylubiquitination and STUB1-mediated degradation. In terms of processing, phosphorylated at basal conditions and dephosphorylated when treated with the ligand. May be dephosphorylated by PPP5C. The phosphorylated form may be inactive and dephosphorylation induces adipogenic activity. Ubiquitinated by E3 ubiquitin-protein ligase complex containing FBXO9; leading to proteasomal degradation. Ubiquitinated at Lys-222 by TRIM55 leading to proteasomal degradation. Ubiquitinated by E3 ubiquitin-protein ligase STUB1/CHIP; leading to proteasomal degradation.

The protein localises to the nucleus. It is found in the cytoplasm. Its activity is regulated as follows. PDPK1 activates its transcriptional activity independently of its kinase activity. Functionally, nuclear receptor that binds peroxisome proliferators such as hypolipidemic drugs and fatty acids. Once activated by a ligand, the nuclear receptor binds to DNA specific PPAR response elements (PPRE) and modulates the transcription of its target genes, such as acyl-CoA oxidase. It therefore controls the peroxisomal beta-oxidation pathway of fatty acids. Key regulator of adipocyte differentiation and glucose homeostasis. ARF6 acts as a key regulator of the tissue-specific adipocyte P2 (aP2) enhancer. Acts as a critical regulator of gut homeostasis by suppressing NF-kappa-B-mediated pro-inflammatory responses. Plays a role in the regulation of cardiovascular circadian rhythms by regulating the transcription of BMAL1 in the blood vessels. The chain is Peroxisome proliferator-activated receptor gamma (PPARG) from Oryctolagus cuniculus (Rabbit).